Consider the following 447-residue polypeptide: Drebrin-like protein A (447 aa).

The region spanning 2-133 (SVNLSKNGAA…EPESIMEKVA (132 aa)) is the ADF-H domain. 2 disordered regions span residues 141 to 160 (NFHKESKRGNEGPQGPVGSV) and 184 to 368 (KDEE…TENQ). Positions 180–245 (AKAEKDEEER…EQEETEKQQT (66 aa)) form a coiled coil. Over residues 184 to 242 (KDEEERRMEENRRANSEKDRLERERKEREQREAETREQRFRERAKEIDAQRKEQEETEK) the composition is skewed to basic and acidic residues. Positions 246–255 (VPASQRSVNP) are enriched in polar residues. A compositionally biased stretch (pro residues) spans 319 to 328 (PESPVPPVSH). The segment covering 345–365 (QEEENIYQDATEDQNIYEDTT) has biased composition (acidic residues). The 60-residue stretch at 388–447 (EKGVCARALYDYQAADDTEISFDPDDLITQIQFIDEGWWRGFSPAGHFGMFPANYVELLE) folds into the SH3 domain.

This sequence belongs to the ABP1 family.

It is found in the cytoplasm. The protein localises to the cytoskeleton. The protein resides in the cell projection. Its subcellular location is the lamellipodium. It localises to the ruffle. It is found in the cell cortex. The protein localises to the cytosol. The protein resides in the synapse. Its subcellular location is the perikaryon. It localises to the neuron projection. It is found in the cell membrane. The protein localises to the cytoplasmic vesicle. The protein resides in the clathrin-coated vesicle membrane. Its subcellular location is the golgi apparatus membrane. It localises to the podosome. It is found in the early endosome. The protein localises to the dendrite. The protein resides in the postsynaptic density. Functionally, adapter protein that binds F-actin and dynamin, and thereby plays a role in receptor-mediated endocytosis. Plays a role in the reorganization of the actin cytoskeleton, formation of cell projections, such as neurites, in neuron morphogenesis and synapse formation. Does not bind G-actin and promote actin polymerization by itself, but excerts its functions by interaction with other proteins. Required for the formation of organized podosome rosettes. The chain is Drebrin-like protein A (dbnl-a) from Xenopus laevis (African clawed frog).